Consider the following 491-residue polypeptide: ATP synthase subunit beta, chloroplastic (491 aa).

Position 172–179 (172–179) interacts with ATP; it reads GGAGVGKT.

The protein belongs to the ATPase alpha/beta chains family. F-type ATPases have 2 components, CF(1) - the catalytic core - and CF(0) - the membrane proton channel. CF(1) has five subunits: alpha(3), beta(3), gamma(1), delta(1), epsilon(1). CF(0) has four main subunits: a(1), b(1), b'(1) and c(9-12).

The protein localises to the plastid. It localises to the chloroplast thylakoid membrane. The catalysed reaction is ATP + H2O + 4 H(+)(in) = ADP + phosphate + 5 H(+)(out). In terms of biological role, produces ATP from ADP in the presence of a proton gradient across the membrane. The catalytic sites are hosted primarily by the beta subunits. This Pisum sativum (Garden pea) protein is ATP synthase subunit beta, chloroplastic.